Reading from the N-terminus, the 1023-residue chain is 2-oxoglutarate dehydrogenase complex component E1 (1023 aa).

The transit peptide at 1–40 (MFHLRTCAAKLRPLTASQTVKTFSQNKPAAIRTFQQIRCY) directs the protein to the mitochondrion. The residue at position 74 (Lys74) is an N6-succinyllysine. Ser100 carries the phosphoserine modification. Ca(2+) contacts are provided by His143, Asp156, and Asp158. Arg312 is a binding site for thiamine diphosphate. An N6-acetyllysine modification is found at Lys401. Thiamine diphosphate-binding residues include Asp411, Asn444, and Ile446. 3 residues coordinate Mg(2+): Asp411, Asn444, and Ile446. Lys534 participates in a covalent cross-link: Glycyl lysine isopeptide (Lys-Gly) (interchain with G-Cter in ubiquitin). Residue Lys564 is modified to N6-succinyllysine. Gln676 is a thiamine diphosphate binding site. Residues 933–939 (LSPFPFD) are recognized by alloreactive CD8 cytotoxic T-lymphocytes in association with a class I MHC protein. Lys970 carries the post-translational modification N6-acetyllysine.

Belongs to the alpha-ketoglutarate dehydrogenase family. Homodimer. The 2-oxoglutarate dehydrogenase complex is composed of OGDH (2-oxoglutarate dehydrogenase; E1), DLST (dihydrolipoamide succinyltransferase; E2), DLD (dihydrolipoamide dehydrogenase; E3) and the assembly factor KGD4. It contains multiple copies of the three enzymatic components (E1, E2 and E3). In the nucleus, the 2-oxoglutarate dehydrogenase complex associates with KAT2A. Interacts with ABHD11; this interaction maintains the functional lipoylation of the 2-oxoglutarate dehydrogenase complex. Thiamine diphosphate is required as a cofactor. Mg(2+) serves as cofactor.

The protein localises to the mitochondrion. It localises to the nucleus. The catalysed reaction is N(6)-[(R)-lipoyl]-L-lysyl-[protein] + 2-oxoglutarate + H(+) = N(6)-[(R)-S(8)-succinyldihydrolipoyl]-L-lysyl-[protein] + CO2. Its activity is regulated as follows. Calcium ions and ADP stimulate, whereas ATP and NADH reduce catalytic activity. 2-oxoglutarate dehydrogenase (E1o) component of the 2-oxoglutarate dehydrogenase complex (OGDHC). Participates in the first step, rate limiting for the overall conversion of 2-oxoglutarate to succinyl-CoA and CO(2) catalyzed by the whole OGDHC. Catalyzes the irreversible decarboxylation of 2-oxoglutarate (alpha-ketoglutarate) via the thiamine diphosphate (ThDP) cofactor and subsequent transfer of the decarboxylated acyl intermediate on an oxidized dihydrolipoyl group that is covalently amidated to the E2 enzyme (dihydrolipoyllysine-residue succinyltransferase or DLST). Plays a key role in the Krebs (citric acid) cycle, which is a common pathway for oxidation of fuel molecules, including carbohydrates, fatty acids, and amino acids. Can catalyze the decarboxylation of 2-oxoadipate in vitro, but at a much lower rate than 2-oxoglutarate. Mainly active in the mitochondrion. A fraction of the 2-oxoglutarate dehydrogenase complex also localizes in the nucleus and is required for lysine succinylation of histones: associates with KAT2A on chromatin and provides succinyl-CoA to histone succinyltransferase KAT2A. This chain is 2-oxoglutarate dehydrogenase complex component E1, found in Mus musculus (Mouse).